A 242-amino-acid polypeptide reads, in one-letter code: Probable transcriptional regulatory protein MHP7448_0474 (242 aa).

Belongs to the TACO1 family.

It is found in the cytoplasm. In Mesomycoplasma hyopneumoniae (strain 7448) (Mycoplasma hyopneumoniae), this protein is Probable transcriptional regulatory protein MHP7448_0474.